A 223-amino-acid polypeptide reads, in one-letter code: Rab-like protein 2A (223 aa).

Residues 28 to 35 (GDSAVGKS), 76 to 80 (DTAGQ), and 133 to 136 (NKID) each bind GTP. Residues 200–223 (KLEQKEEDTSGQEQSDTTKSPSPS) are disordered. Residues 210–223 (GQEQSDTTKSPSPS) show a composition bias toward polar residues.

The protein belongs to the small GTPase superfamily. Rab family. Interacts with IFT27, IFT81, IFT172, ATP6V1E1, HK1, LDHC, MAPRE1 and HSPA2. As to expression, isoform 2 is expressed in the testis and localizes to the mid-piece of the sperm tail (at protein level). Isoform 2 is expressed at higher levels in testis than isoform 1. Isoform 1 and isoform 2 are widely expressed and notably within other tissues containing motile cilia including the lung, trachea, brain, ovary and kidney.

Plays an essential role in male fertility, sperm intra-flagellar transport, and tail assembly. Binds, in a GTP-regulated manner, to a specific set of effector proteins including key proteins involved in cilia development and function and delivers them into the growing sperm tail. This is Rab-like protein 2A (Rabl2) from Mus musculus (Mouse).